The chain runs to 456 residues: uncharacterized protein (456 aa).

This sequence belongs to the herpesviridae UL49 family.

This is an uncharacterized protein from Equus caballus (Horse).